Here is a 254-residue protein sequence, read N- to C-terminus: HTH-type transcriptional regulator GlvR (254 aa).

An HTH rpiR-type domain is found at 1–77 (MQLEELINQH…VFLKWEDQPE (77 aa)). The H-T-H motif DNA-binding region spans 37 to 56 (IDALAKACSVSRSSILRLAQ). Positions 106-248 (MCQLIDAADR…FRAYVDYKEA (143 aa)) constitute an SIS domain.

In terms of biological role, positive regulator of the glv operon expression, which consists of GlvA, GlvR and GlvC. In Bacillus subtilis (strain 168), this protein is HTH-type transcriptional regulator GlvR (glvR).